A 655-amino-acid polypeptide reads, in one-letter code: Probable replication restart protein PriA (655 aa).

Zn(2+)-binding residues include C368, C371, C377, C380, C396, C399, C408, and C411.

Belongs to the helicase family. PriA subfamily. Component of the replication restart primosome. It depends on Zn(2+) as a cofactor.

In terms of biological role, initiates the restart of stalled replication forks, which reloads the replicative helicase on sites other than the origin of replication. Recognizes and binds to abandoned replication forks and remodels them to uncover a helicase loading site. Promotes assembly of the primosome at these replication forks. The sequence is that of Probable replication restart protein PriA from Mycobacterium bovis (strain ATCC BAA-935 / AF2122/97).